The chain runs to 228 residues: Translation initiation factor 6 (228 aa).

Belongs to the eIF-6 family.

In terms of biological role, binds to the 50S ribosomal subunit and prevents its association with the 30S ribosomal subunit to form the 70S initiation complex. This chain is Translation initiation factor 6, found in Thermococcus onnurineus (strain NA1).